We begin with the raw amino-acid sequence, 39 residues long: Large ribosomal subunit protein bL36 (39 aa).

Belongs to the bacterial ribosomal protein bL36 family.

In Levilactobacillus brevis (strain ATCC 367 / BCRC 12310 / CIP 105137 / JCM 1170 / LMG 11437 / NCIMB 947 / NCTC 947) (Lactobacillus brevis), this protein is Large ribosomal subunit protein bL36.